Here is a 505-residue protein sequence, read N- to C-terminus: Amidophosphoribosyltransferase (505 aa).

Catalysis depends on C2, which acts as the Nucleophile. The Glutamine amidotransferase type-2 domain occupies 2–236 (CGIVGIAGVM…PGEAIYITEE (235 aa)). 3 residues coordinate Mg(2+): T305, D367, and D368.

The protein in the C-terminal section; belongs to the purine/pyrimidine phosphoribosyltransferase family. As to quaternary structure, homotetramer. Requires Mg(2+) as cofactor.

It catalyses the reaction 5-phospho-beta-D-ribosylamine + L-glutamate + diphosphate = 5-phospho-alpha-D-ribose 1-diphosphate + L-glutamine + H2O. Its pathway is purine metabolism; IMP biosynthesis via de novo pathway; N(1)-(5-phospho-D-ribosyl)glycinamide from 5-phospho-alpha-D-ribose 1-diphosphate: step 1/2. With respect to regulation, inhibited by iodoacetamide and by the glutamine analogs chloroketone and DON. Catalyzes the formation of phosphoribosylamine from phosphoribosylpyrophosphate (PRPP) and glutamine. Can also use NH(3) in place of glutamine. This chain is Amidophosphoribosyltransferase, found in Escherichia coli (strain K12).